The primary structure comprises 118 residues: Large ribosomal subunit protein uL18 (118 aa).

Positions 1–25 are disordered; the sequence is MITKPDKNKVRQKRHRRVRGKLSGT. A compositionally biased stretch (basic residues) spans 10–20; the sequence is VRQKRHRRVRG.

It belongs to the universal ribosomal protein uL18 family. As to quaternary structure, part of the 50S ribosomal subunit; part of the 5S rRNA/L5/L18/L25 subcomplex. Contacts the 5S and 23S rRNAs.

Its function is as follows. This is one of the proteins that bind and probably mediate the attachment of the 5S RNA into the large ribosomal subunit, where it forms part of the central protuberance. The protein is Large ribosomal subunit protein uL18 of Streptococcus gordonii (strain Challis / ATCC 35105 / BCRC 15272 / CH1 / DL1 / V288).